A 431-amino-acid polypeptide reads, in one-letter code: Histidinol dehydrogenase (431 aa).

Positions 127, 189, and 212 each coordinate NAD(+). The substrate site is built by Ser237, Gln259, and His262. Zn(2+) is bound by residues Gln259 and His262. Catalysis depends on proton acceptor residues Glu326 and His327. Residues His327, Asp360, Glu414, and His419 each coordinate substrate. Residue Asp360 participates in Zn(2+) binding. Residue His419 participates in Zn(2+) binding.

This sequence belongs to the histidinol dehydrogenase family. Zn(2+) serves as cofactor.

It catalyses the reaction L-histidinol + 2 NAD(+) + H2O = L-histidine + 2 NADH + 3 H(+). It functions in the pathway amino-acid biosynthesis; L-histidine biosynthesis; L-histidine from 5-phospho-alpha-D-ribose 1-diphosphate: step 9/9. Functionally, catalyzes the sequential NAD-dependent oxidations of L-histidinol to L-histidinaldehyde and then to L-histidine. This Xylella fastidiosa (strain Temecula1 / ATCC 700964) protein is Histidinol dehydrogenase.